A 422-amino-acid polypeptide reads, in one-letter code: Enolase (422 aa).

Position 162 (Q162) interacts with (2R)-2-phosphoglycerate. Catalysis depends on E204, which acts as the Proton donor. The Mg(2+) site is built by D241, E285, and D312. (2R)-2-phosphoglycerate-binding residues include K337, R366, S367, and K388. The active-site Proton acceptor is K337.

This sequence belongs to the enolase family. Requires Mg(2+) as cofactor.

The protein localises to the cytoplasm. The protein resides in the secreted. Its subcellular location is the cell surface. The enzyme catalyses (2R)-2-phosphoglycerate = phosphoenolpyruvate + H2O. The protein operates within carbohydrate degradation; glycolysis; pyruvate from D-glyceraldehyde 3-phosphate: step 4/5. Catalyzes the reversible conversion of 2-phosphoglycerate (2-PG) into phosphoenolpyruvate (PEP). It is essential for the degradation of carbohydrates via glycolysis. The polypeptide is Enolase (Wolinella succinogenes (strain ATCC 29543 / DSM 1740 / CCUG 13145 / JCM 31913 / LMG 7466 / NCTC 11488 / FDC 602W) (Vibrio succinogenes)).